The chain runs to 388 residues: 3-oxo-tetronate kinase (388 aa).

ATP-binding positions include S258 and 360–363 (GGET).

This sequence belongs to the four-carbon acid sugar kinase family.

It carries out the reaction 3-dehydro-L-erythronate + ATP = 3-dehydro-4-O-phospho-L-erythronate + ADP + H(+). The catalysed reaction is 3-dehydro-D-erythronate + ATP = 3-dehydro-4-O-phospho-D-erythronate + ADP + H(+). Functionally, catalyzes the ATP-dependent phosphorylation of 3-oxo-tetronate to 3-oxo-tetronate 4-phosphate. The sequence is that of 3-oxo-tetronate kinase from Escherichia coli (strain K12).